A 289-amino-acid chain; its full sequence is 2-hydroxy-6-oxononadienedioate/2-hydroxy-6-oxononatrienedioate hydrolase (289 aa).

In terms of domain architecture, AB hydrolase-1 spans 39–275 (TVVMLHGSGP…RCGHWAQWEH (237 aa)). The Proton acceptor role is filled by His-269.

It belongs to the AB hydrolase superfamily. MhpC family. Homodimer.

It catalyses the reaction (2Z,4E)-2-hydroxy-6-oxonona-2,4-dienedioate + H2O = (2Z)-2-hydroxypenta-2,4-dienoate + succinate + H(+). It carries out the reaction (2Z,4E,7E)-2-hydroxy-6-oxonona-2,4,7-trienedioate + H2O = (2Z)-2-hydroxypenta-2,4-dienoate + fumarate + H(+). It participates in aromatic compound metabolism; 3-phenylpropanoate degradation. Its function is as follows. Catalyzes the cleavage of the C5-C6 bond of 2-hydroxy-6-oxononadienedioate and 2-hydroxy-6-oxononatrienedioate, a dienol ring fission product of the bacterial meta-cleavage pathway for degradation of phenylpropionic acid. This Paraburkholderia xenovorans (strain LB400) protein is 2-hydroxy-6-oxononadienedioate/2-hydroxy-6-oxononatrienedioate hydrolase.